Reading from the N-terminus, the 476-residue chain is Glycogen synthase (476 aa).

K15 is an ADP-alpha-D-glucose binding site.

The protein belongs to the glycosyltransferase 1 family. Bacterial/plant glycogen synthase subfamily.

The catalysed reaction is [(1-&gt;4)-alpha-D-glucosyl](n) + ADP-alpha-D-glucose = [(1-&gt;4)-alpha-D-glucosyl](n+1) + ADP + H(+). The protein operates within glycan biosynthesis; glycogen biosynthesis. Synthesizes alpha-1,4-glucan chains using ADP-glucose. This is Glycogen synthase from Haemophilus influenzae (strain PittEE).